The sequence spans 198 residues: dTTP/UTP pyrophosphatase (198 aa).

D72 acts as the Proton acceptor in catalysis.

This sequence belongs to the Maf family. YhdE subfamily. It depends on a divalent metal cation as a cofactor.

It localises to the cytoplasm. It carries out the reaction dTTP + H2O = dTMP + diphosphate + H(+). The enzyme catalyses UTP + H2O = UMP + diphosphate + H(+). Its function is as follows. Nucleoside triphosphate pyrophosphatase that hydrolyzes dTTP and UTP. May have a dual role in cell division arrest and in preventing the incorporation of modified nucleotides into cellular nucleic acids. The polypeptide is dTTP/UTP pyrophosphatase (Pseudomonas fluorescens (strain Pf0-1)).